Consider the following 205-residue polypeptide: Ephrin-A1 (205 aa).

The signal sequence occupies residues M1–A18. Positions D19 to I151 constitute an Ephrin RBD domain. N-linked (GlcNAc...) asparagine glycosylation is present at N26. Disulfide bonds link C51-C92 and C80-C140. Residue S182 is the site of GPI-anchor amidated serine attachment. A propeptide spans A183–S205 (removed in mature form).

It belongs to the ephrin family. In terms of assembly, monomer. Homodimer. Forms heterodimers with EPHA2. Binds to the receptor tyrosine kinases EPHA2, EPHA3, EPHA4, EPHA5, EPHA6 and EPHA7. Also binds with low affinity to EPHA1. In terms of processing, undergoes proteolysis by a metalloprotease to give rise to a soluble monomeric form. Post-translationally, N-Glycosylation is required for binding to EPHA2 receptor and inducing its internalization.

Its subcellular location is the cell membrane. It localises to the secreted. Functionally, cell surface GPI-bound ligand for Eph receptors, a family of receptor tyrosine kinases which are crucial for migration, repulsion and adhesion during neuronal, vascular and epithelial development. Binds promiscuously Eph receptors residing on adjacent cells, leading to contact-dependent bidirectional signaling into neighboring cells. Plays an important role in angiogenesis and tumor neovascularization. The recruitment of VAV2, VAV3 and PI3-kinase p85 subunit by phosphorylated EPHA2 is critical for EFNA1-induced RAC1 GTPase activation and vascular endothelial cell migration and assembly. Exerts anti-oncogenic effects in tumor cells through activation and down-regulation of EPHA2. Activates EPHA2 by inducing tyrosine phosphorylation which leads to its internalization and degradation. Acts as a negative regulator in the tumorigenesis of gliomas by down-regulating EPHA2 and FAK. Can evoke collapse of embryonic neuronal growth cone and regulates dendritic spine morphogenesis. This chain is Ephrin-A1 (EFNA1), found in Sus scrofa (Pig).